The following is a 104-amino-acid chain: Pyrimidine/purine nucleoside phosphorylase (104 aa).

This sequence belongs to the nucleoside phosphorylase PpnP family.

It carries out the reaction a purine D-ribonucleoside + phosphate = a purine nucleobase + alpha-D-ribose 1-phosphate. It catalyses the reaction adenosine + phosphate = alpha-D-ribose 1-phosphate + adenine. The catalysed reaction is cytidine + phosphate = cytosine + alpha-D-ribose 1-phosphate. The enzyme catalyses guanosine + phosphate = alpha-D-ribose 1-phosphate + guanine. It carries out the reaction inosine + phosphate = alpha-D-ribose 1-phosphate + hypoxanthine. It catalyses the reaction thymidine + phosphate = 2-deoxy-alpha-D-ribose 1-phosphate + thymine. The catalysed reaction is uridine + phosphate = alpha-D-ribose 1-phosphate + uracil. The enzyme catalyses xanthosine + phosphate = alpha-D-ribose 1-phosphate + xanthine. Functionally, catalyzes the phosphorolysis of diverse nucleosides, yielding D-ribose 1-phosphate and the respective free bases. Can use uridine, adenosine, guanosine, cytidine, thymidine, inosine and xanthosine as substrates. Also catalyzes the reverse reactions. This is Pyrimidine/purine nucleoside phosphorylase from Leptospira borgpetersenii serovar Hardjo-bovis (strain L550).